Consider the following 30-residue polypeptide: Dermaseptin-S3 (30 aa).

This sequence belongs to the frog skin active peptide (FSAP) family. Dermaseptin subfamily. As to quaternary structure, monomer and oligomer. Forms aggregates in aqueous environments. As to expression, expressed by the skin glands.

Its subcellular location is the secreted. Its function is as follows. Potent antimicrobial peptide with activity against bacteria and protozoa. Also has activity against fungi. Probably acts by disturbing membrane functions with its amphipathic structure. Binds to healthy erythrocytes (this binding is receptor independent), but has very weak hemolytic activity. Does not bind to P.falciparum infected erythrocytes, but accumulates within the parasite. Kills the parasite, but has no hemolytic activity on the host cell. This is Dermaseptin-S3 from Phyllomedusa sauvagei (Sauvage's leaf frog).